The primary structure comprises 411 residues: Serine--tRNA ligase (411 aa).

Residue 226-228 coordinates L-serine; the sequence is TSE. 257–259 contributes to the ATP binding site; that stretch reads RKE. Glutamate 280 contributes to the L-serine binding site. 344-347 serves as a coordination point for ATP; that stretch reads EISS. Residue serine 379 coordinates L-serine.

The protein belongs to the class-II aminoacyl-tRNA synthetase family. Type-1 seryl-tRNA synthetase subfamily. In terms of assembly, homodimer. The tRNA molecule binds across the dimer.

It is found in the cytoplasm. It catalyses the reaction tRNA(Ser) + L-serine + ATP = L-seryl-tRNA(Ser) + AMP + diphosphate + H(+). It carries out the reaction tRNA(Sec) + L-serine + ATP = L-seryl-tRNA(Sec) + AMP + diphosphate + H(+). It functions in the pathway aminoacyl-tRNA biosynthesis; selenocysteinyl-tRNA(Sec) biosynthesis; L-seryl-tRNA(Sec) from L-serine and tRNA(Sec): step 1/1. Catalyzes the attachment of serine to tRNA(Ser). Is also able to aminoacylate tRNA(Sec) with serine, to form the misacylated tRNA L-seryl-tRNA(Sec), which will be further converted into selenocysteinyl-tRNA(Sec). This Campylobacter jejuni subsp. doylei (strain ATCC BAA-1458 / RM4099 / 269.97) protein is Serine--tRNA ligase.